A 365-amino-acid chain; its full sequence is MINTTSRRKIEHLKLCAESPVEARQVSAGFEDVTLIHRALPELNMDELDLSVDFLGKRIKAPFLIASITGGHPDTIPVNAALAAAAEELGVGIGVGSQRAAIDDPSQEDSFRVVRDEAPDAFVYGNVGAAQIRQYGVEGVEKLIEMIDADALAIHLNFLQEAVQPEGDRDATGCLDMITEICSQIKTPVIVKETGAGISREDAILFQKAGVSAIDVGGAGGTSWAGVEVYRAKESRDSVSERLGELFWDFGIPTVASLIESRVSLPLIATGGIRNGLDIAKSIALGASAASAALPFVGPSLEGKESVVRVLSCMLEEFKAAMFLCGCGNIKDLHNSPVVVTGWTREYLEQRGFNVKDLSLPGNAL.

8-9 (RK) is a binding site for substrate. FMN is bound by residues 67-69 (SIT), serine 97, and asparagine 126. 97–99 (SQR) provides a ligand contact to substrate. Glutamine 160 is a binding site for substrate. Residue glutamate 161 coordinates Mg(2+). Residues lysine 192, threonine 222, 272–274 (GIR), and 293–294 (AL) each bind FMN.

This sequence belongs to the IPP isomerase type 2 family. Homooctamer. Dimer of tetramers. It depends on FMN as a cofactor. The cofactor is NADPH. Requires Mg(2+) as cofactor.

The protein resides in the cytoplasm. It carries out the reaction isopentenyl diphosphate = dimethylallyl diphosphate. Its function is as follows. Involved in the biosynthesis of isoprenoids. Catalyzes the 1,3-allylic rearrangement of the homoallylic substrate isopentenyl (IPP) to its allylic isomer, dimethylallyl diphosphate (DMAPP). The sequence is that of Isopentenyl-diphosphate delta-isomerase from Methanosarcina mazei (strain ATCC BAA-159 / DSM 3647 / Goe1 / Go1 / JCM 11833 / OCM 88) (Methanosarcina frisia).